The sequence spans 35 residues: Cytochrome b6-f complex subunit 7 (35 aa).

Residues 9-27 traverse the membrane as a helical segment; the sequence is AGLSIVLTLVGVALGYGIL.

It belongs to the PetM family. In terms of assembly, the 4 large subunits of the cytochrome b6-f complex are cytochrome b6, subunit IV (17 kDa polypeptide, PetD), cytochrome f and the Rieske protein, while the 4 small subunits are PetG, PetL, PetM and PetN. The complex functions as a dimer.

It is found in the cellular thylakoid membrane. Its function is as follows. Component of the cytochrome b6-f complex, which mediates electron transfer between photosystem II (PSII) and photosystem I (PSI), cyclic electron flow around PSI, and state transitions. The sequence is that of Cytochrome b6-f complex subunit 7 from Synechococcus sp. (strain JA-3-3Ab) (Cyanobacteria bacterium Yellowstone A-Prime).